Consider the following 720-residue polypeptide: GTPase-activating protein gyp2 (720 aa).

Residues 20–85 enclose the GRAM domain; sequence LDPASFFRIN…AAVRKLEREN (66 aa). The Rab-GAP TBC domain maps to 216 to 404; the sequence is GIPNNLRADI…RILDCLFVNG (189 aa).

Its subcellular location is the cytoplasm. It localises to the nucleus. In terms of biological role, stimulates specifically the GTPase activity of ypt2 and ryh1. Inactivates ryh1 during recycling between the endosome and the Golgi compartments. This chain is GTPase-activating protein gyp2, found in Schizosaccharomyces pombe (strain 972 / ATCC 24843) (Fission yeast).